The chain runs to 380 residues: Cytochrome b (380 aa).

A run of 4 helical transmembrane segments spans residues 34 to 54 (FGSL…LLAM), 78 to 99 (WLIR…FLHI), 114 to 134 (WNTG…GYVL), and 179 to 199 (FFAL…IHLT). Positions 84 and 98 each coordinate heme b. Heme b is bound by residues His183 and His197. Residue His202 participates in a ubiquinone binding. The next 4 membrane-spanning stretches (helical) occupy residues 227 to 247 (LKDI…ALFS), 289 to 309 (LGGV…PFLH), 321 to 341 (LSQI…WIGS), and 348 to 368 (FIII…ILFP).

Belongs to the cytochrome b family. The cytochrome bc1 complex contains 11 subunits: 3 respiratory subunits (MT-CYB, CYC1 and UQCRFS1), 2 core proteins (UQCRC1 and UQCRC2) and 6 low-molecular weight proteins (UQCRH/QCR6, UQCRB/QCR7, UQCRQ/QCR8, UQCR10/QCR9, UQCR11/QCR10 and a cleavage product of UQCRFS1). This cytochrome bc1 complex then forms a dimer. Heme b serves as cofactor.

It localises to the mitochondrion inner membrane. Functionally, component of the ubiquinol-cytochrome c reductase complex (complex III or cytochrome b-c1 complex) that is part of the mitochondrial respiratory chain. The b-c1 complex mediates electron transfer from ubiquinol to cytochrome c. Contributes to the generation of a proton gradient across the mitochondrial membrane that is then used for ATP synthesis. The protein is Cytochrome b (MT-CYB) of Polyplectron bicalcaratum (Grey peacock-pheasant).